The chain runs to 234 residues: Probable septum site-determining protein MinC (234 aa).

This sequence belongs to the MinC family. Interacts with MinD and FtsZ.

Its function is as follows. Cell division inhibitor that blocks the formation of polar Z ring septums. Rapidly oscillates between the poles of the cell to destabilize FtsZ filaments that have formed before they mature into polar Z rings. Prevents FtsZ polymerization. The chain is Probable septum site-determining protein MinC from Buchnera aphidicola subsp. Baizongia pistaciae (strain Bp).